Reading from the N-terminus, the 269-residue chain is 5'-nucleotidase SurE (269 aa).

Asp-11, Asp-12, Ser-42, and Asn-90 together coordinate a divalent metal cation.

This sequence belongs to the SurE nucleotidase family. A divalent metal cation serves as cofactor.

The protein resides in the cytoplasm. It catalyses the reaction a ribonucleoside 5'-phosphate + H2O = a ribonucleoside + phosphate. Its function is as follows. Nucleotidase that shows phosphatase activity on nucleoside 5'-monophosphates. In Haloarcula marismortui (strain ATCC 43049 / DSM 3752 / JCM 8966 / VKM B-1809) (Halobacterium marismortui), this protein is 5'-nucleotidase SurE.